The sequence spans 222 residues: Uridine diphosphate glucose pyrophosphatase NUDT14 (222 aa).

A Nudix hydrolase domain is found at Lys-38–Phe-206. The short motif at Pro-111–Tyr-129 is the Nudix box element.

The protein belongs to the Nudix hydrolase family. Homodimer. Requires Mg(2+) as cofactor.

Its subcellular location is the cytoplasm. It carries out the reaction UDP-sugar + H2O = UMP + alpha-D-aldose 1-phosphate.. Hydrolyzes UDP-glucose to glucose 1-phosphate and UMP and ADP-ribose to ribose 5-phosphate and AMP. The physiological substrate is probably UDP-glucose. Poor activity on other substrates such as ADP-glucose, CDP-glucose, GDP-glucose and GDP-mannose. This chain is Uridine diphosphate glucose pyrophosphatase NUDT14 (NUDT14), found in Bos taurus (Bovine).